A 513-amino-acid chain; its full sequence is Type-2 serine--tRNA ligase (513 aa).

Ala-312 contributes to the L-serine binding site. Cys-314 is a binding site for Zn(2+). An L-serine-binding site is contributed by Arg-344. ATP is bound by residues 344-346 (RWE) and 355-356 (RV). 361-363 (RVE) contributes to the L-serine binding site. Zn(2+) contacts are provided by Glu-363 and Cys-467. Arg-474 contributes to the ATP binding site.

This sequence belongs to the class-II aminoacyl-tRNA synthetase family. Type-2 seryl-tRNA synthetase subfamily. Homodimer. Zn(2+) serves as cofactor.

It is found in the cytoplasm. The catalysed reaction is tRNA(Ser) + L-serine + ATP = L-seryl-tRNA(Ser) + AMP + diphosphate + H(+). The enzyme catalyses tRNA(Sec) + L-serine + ATP = L-seryl-tRNA(Sec) + AMP + diphosphate + H(+). The protein operates within aminoacyl-tRNA biosynthesis; selenocysteinyl-tRNA(Sec) biosynthesis; L-seryl-tRNA(Sec) from L-serine and tRNA(Sec): step 1/1. Catalyzes the attachment of serine to tRNA(Ser). Is also able to aminoacylate tRNA(Sec) with serine, to form the misacylated tRNA L-seryl-tRNA(Sec), which will be further converted into selenocysteinyl-tRNA(Sec). This Methanothermobacter thermautotrophicus (strain ATCC 29096 / DSM 1053 / JCM 10044 / NBRC 100330 / Delta H) (Methanobacterium thermoautotrophicum) protein is Type-2 serine--tRNA ligase (serS).